The sequence spans 85 residues: MDISRAEQRILHLLAQGGRIELVRDDTRKIEKITLYTRDGWIFGGLDLLTFRKLKQKRAIASSGGKPYRITTRGLELVRGELDNR.

It belongs to the UPF0386 family.

This chain is UPF0386 protein Atu1321, found in Agrobacterium fabrum (strain C58 / ATCC 33970) (Agrobacterium tumefaciens (strain C58)).